The primary structure comprises 540 residues: Glucose-6-phosphate isomerase (540 aa).

Residue Glu350 is the Proton donor of the active site. Residues His381 and Lys503 contribute to the active site.

It belongs to the GPI family.

Its subcellular location is the cytoplasm. It catalyses the reaction alpha-D-glucose 6-phosphate = beta-D-fructose 6-phosphate. Its pathway is carbohydrate biosynthesis; gluconeogenesis. The protein operates within carbohydrate degradation; glycolysis; D-glyceraldehyde 3-phosphate and glycerone phosphate from D-glucose: step 2/4. Catalyzes the reversible isomerization of glucose-6-phosphate to fructose-6-phosphate. The sequence is that of Glucose-6-phosphate isomerase from Burkholderia pseudomallei (strain 1106a).